The sequence spans 545 residues: Methionine--tRNA ligase (545 aa).

The 'HIGH' region motif lies at 13–23 (PYANGPLHIGH). Residues cysteine 144, cysteine 147, cysteine 157, and cysteine 160 each contribute to the Zn(2+) site. Positions 330 to 334 (KISKS) match the 'KMSKS' region motif. Lysine 333 is a binding site for ATP.

The protein belongs to the class-I aminoacyl-tRNA synthetase family. MetG type 1 subfamily. As to quaternary structure, monomer. Zn(2+) serves as cofactor.

The protein localises to the cytoplasm. The catalysed reaction is tRNA(Met) + L-methionine + ATP = L-methionyl-tRNA(Met) + AMP + diphosphate. Functionally, is required not only for elongation of protein synthesis but also for the initiation of all mRNA translation through initiator tRNA(fMet) aminoacylation. The chain is Methionine--tRNA ligase from Blochmanniella floridana.